The sequence spans 255 residues: 5'-nucleotidase SurE (255 aa).

A divalent metal cation is bound by residues Asp8, Asp9, Ser40, and Asn95.

This sequence belongs to the SurE nucleotidase family. The cofactor is a divalent metal cation.

It is found in the cytoplasm. The enzyme catalyses a ribonucleoside 5'-phosphate + H2O = a ribonucleoside + phosphate. In terms of biological role, nucleotidase that shows phosphatase activity on nucleoside 5'-monophosphates. The sequence is that of 5'-nucleotidase SurE from Solidesulfovibrio magneticus (strain ATCC 700980 / DSM 13731 / RS-1) (Desulfovibrio magneticus).